The primary structure comprises 372 residues: Anhydro-N-acetylmuramic acid kinase (372 aa).

18-25 (GTSLDGID) is an ATP binding site.

This sequence belongs to the anhydro-N-acetylmuramic acid kinase family.

The enzyme catalyses 1,6-anhydro-N-acetyl-beta-muramate + ATP + H2O = N-acetyl-D-muramate 6-phosphate + ADP + H(+). It functions in the pathway amino-sugar metabolism; 1,6-anhydro-N-acetylmuramate degradation. It participates in cell wall biogenesis; peptidoglycan recycling. Its function is as follows. Catalyzes the specific phosphorylation of 1,6-anhydro-N-acetylmuramic acid (anhMurNAc) with the simultaneous cleavage of the 1,6-anhydro ring, generating MurNAc-6-P. Is required for the utilization of anhMurNAc either imported from the medium or derived from its own cell wall murein, and thus plays a role in cell wall recycling. This is Anhydro-N-acetylmuramic acid kinase from Thiobacillus denitrificans (strain ATCC 25259 / T1).